Here is a 605-residue protein sequence, read N- to C-terminus: Golgi-associated RAB2 interactor protein 3 (605 aa).

Disordered regions lie at residues 234 to 265 and 407 to 529; these read GEGI…AART and YMSE…ALQK. A compositionally biased stretch (low complexity) spans 239-265; it reads HASHGTASAASPSTSTPGAAEGGAART. Over residues 434-457 the composition is skewed to basic residues; sequence KKDRHPSRKSSHHRKAGESHRRRA. A Bipartite nuclear localization signal motif is present at residues 441-458; sequence RKSSHHRKAGESHRRRAG. Polar residues predominate over residues 463–473; that stretch reads KASSHRSASGH. Positions 475 to 484 are enriched in basic and acidic residues; the sequence is NTRDDKKEKG. Residues 489–500 show a composition bias toward basic residues; that stretch reads RGKRHGSSRKSS. Polar residues predominate over residues 513-526; that stretch reads QELGKNQSASSTGA. S592 carries the phosphoserine modification.

Belongs to the GARIN family. In terms of assembly, interacts (via N-terminus) with RAB2B (in GTP-bound form). Interacts with FRG1. In terms of tissue distribution, expressed in adult spermatocytes and spermatids (at protein level).

It is found in the golgi apparatus. The protein localises to the nucleus. The protein resides in the cajal body. In terms of biological role, may be involved in RNA biogenesis. This is Golgi-associated RAB2 interactor protein 3 from Homo sapiens (Human).